Reading from the N-terminus, the 304-residue chain is N-acetylmuramic acid 6-phosphate etherase (304 aa).

Positions 62–225 (IVTAFRQGGR…TTASMILMGK (164 aa)) constitute an SIS domain. Residue Glu90 is the Proton donor of the active site. Glu121 is a catalytic residue.

This sequence belongs to the GCKR-like family. MurNAc-6-P etherase subfamily. Homodimer.

The catalysed reaction is N-acetyl-D-muramate 6-phosphate + H2O = N-acetyl-D-glucosamine 6-phosphate + (R)-lactate. It functions in the pathway amino-sugar metabolism; 1,6-anhydro-N-acetylmuramate degradation. It participates in amino-sugar metabolism; N-acetylmuramate degradation. Its pathway is cell wall biogenesis; peptidoglycan recycling. In terms of biological role, specifically catalyzes the cleavage of the D-lactyl ether substituent of MurNAc 6-phosphate, producing GlcNAc 6-phosphate and D-lactate. Together with AnmK, is also required for the utilization of anhydro-N-acetylmuramic acid (anhMurNAc) either imported from the medium or derived from its own cell wall murein, and thus plays a role in cell wall recycling. The sequence is that of N-acetylmuramic acid 6-phosphate etherase from Actinobacillus succinogenes (strain ATCC 55618 / DSM 22257 / CCUG 43843 / 130Z).